We begin with the raw amino-acid sequence, 134 residues long: MNTLSLNIVTPNGSVYDREDVNLAVLQTTAGEIGVMYGHIPTVAALEIGYVKINFDGGSEYIAVSEGFVEVRQDKLSIIVQTAEPANEIDVARAELAKSRAESHLNNEEDNSDVNRAKRALERANNRIRVANLQ.

Belongs to the ATPase epsilon chain family. As to quaternary structure, F-type ATPases have 2 components, CF(1) - the catalytic core - and CF(0) - the membrane proton channel. CF(1) has five subunits: alpha(3), beta(3), gamma(1), delta(1), epsilon(1). CF(0) has three main subunits: a, b and c.

It is found in the cell membrane. Produces ATP from ADP in the presence of a proton gradient across the membrane. This is ATP synthase epsilon chain from Staphylococcus saprophyticus subsp. saprophyticus (strain ATCC 15305 / DSM 20229 / NCIMB 8711 / NCTC 7292 / S-41).